We begin with the raw amino-acid sequence, 593 residues long: MGEALRGLKRTIMCGEPRENNIGEKVTVMGWVQRKRNLGGLIFVDLRDRTGIMQIVFGEEINKEAFEKSDNVKSEYCIAVTGEIVKRQSPNNDMETGAVELKGEDIKILSESETPPIYIKEGLDASENVRLKYRYLDLRRPDMQKIFMIRHKTCKVVRDFLDENGFLEMETPILTKSTPEGARDYLVPSRNYKGMFYALPQSPQIFKQLLMVSGYDKYFQITKCFRDEDLRANRQPEFTQIDMELSFVEEDDVIDLNEKLLAKVFKEVAGIDVKLPIERMPYKIAMEKYGSDKPDLRFGMEINDLTEAVKNSEFKVFKGAIEAGGSVRAIKAENCATMGRKQIDKLQDFVKTYKAKGLAWIAYKEDEIKSPIAKFLTEEEMKAILEKMDAKVGDLILIVADKNNVVFESLGALRLHLAKELDIINKDEFRFVWITEFPLLAYNEEEGRYQAEHHPFTAIMDEDIDLLDTDPGKVRAKAYDIVLNGEELGGGSIRIHDSKLQEKMFSVLGFTKEKAWERFGFLLEAFKFGPPPHGGLAYGLDRMIMFLAGTENIKDVITFPKNQNAFCPLTEAPNVVDENQLEELGIKKIEKED.

Residue E180 participates in L-aspartate binding. Positions 204-207 (QIFK) are aspartate. R226 is a binding site for L-aspartate. Residues 226–228 (RDE) and Q235 each bind ATP. An L-aspartate-binding site is contributed by H453. E487 contacts ATP. R494 provides a ligand contact to L-aspartate. Position 539 to 542 (539 to 542 (GLDR)) interacts with ATP.

This sequence belongs to the class-II aminoacyl-tRNA synthetase family. Type 1 subfamily. Homodimer.

The protein resides in the cytoplasm. The enzyme catalyses tRNA(Asp) + L-aspartate + ATP = L-aspartyl-tRNA(Asp) + AMP + diphosphate. Functionally, catalyzes the attachment of L-aspartate to tRNA(Asp) in a two-step reaction: L-aspartate is first activated by ATP to form Asp-AMP and then transferred to the acceptor end of tRNA(Asp). This chain is Aspartate--tRNA ligase, found in Clostridium botulinum (strain Kyoto / Type A2).